Here is a 99-residue protein sequence, read N- to C-terminus: Large ribosomal subunit protein eL21 (99 aa).

This sequence belongs to the eukaryotic ribosomal protein eL21 family.

The polypeptide is Large ribosomal subunit protein eL21 (Methanocella arvoryzae (strain DSM 22066 / NBRC 105507 / MRE50)).